The primary structure comprises 303 residues: GTPase Era (303 aa).

The region spanning 7–174 (KSGFVAILGR…IDTLSEKLDE (168 aa)) is the Era-type G domain. The tract at residues 15-22 (GRPNVGKS) is G1. A GTP-binding site is contributed by 15–22 (GRPNVGKS). The segment at 41-45 (QTTRN) is G2. The G3 stretch occupies residues 62 to 65 (DTPG). Residues 62 to 66 (DTPGI) and 124 to 127 (NKID) contribute to the GTP site. The G4 stretch occupies residues 124–127 (NKID). The G5 stretch occupies residues 153 to 155 (ISA). The KH type-2 domain maps to 205–283 (TREEVPHSIA…YLETWVKIKN (79 aa)).

The protein belongs to the TRAFAC class TrmE-Era-EngA-EngB-Septin-like GTPase superfamily. Era GTPase family. In terms of assembly, monomer.

Its subcellular location is the cytoplasm. It localises to the cell membrane. An essential GTPase that binds both GDP and GTP, with rapid nucleotide exchange. Plays a role in 16S rRNA processing and 30S ribosomal subunit biogenesis and possibly also in cell cycle regulation and energy metabolism. In Lactococcus lactis subsp. lactis (strain IL1403) (Streptococcus lactis), this protein is GTPase Era.